The sequence spans 417 residues: Serine hydroxymethyltransferase (417 aa).

(6S)-5,6,7,8-tetrahydrofolate-binding positions include L120 and 124–126 (GHL). The residue at position 229 (K229) is an N6-(pyridoxal phosphate)lysine. 354–356 (SPF) is a binding site for (6S)-5,6,7,8-tetrahydrofolate.

Belongs to the SHMT family. As to quaternary structure, homodimer. It depends on pyridoxal 5'-phosphate as a cofactor.

Its subcellular location is the cytoplasm. It catalyses the reaction (6R)-5,10-methylene-5,6,7,8-tetrahydrofolate + glycine + H2O = (6S)-5,6,7,8-tetrahydrofolate + L-serine. It functions in the pathway one-carbon metabolism; tetrahydrofolate interconversion. The protein operates within amino-acid biosynthesis; glycine biosynthesis; glycine from L-serine: step 1/1. Catalyzes the reversible interconversion of serine and glycine with tetrahydrofolate (THF) serving as the one-carbon carrier. This reaction serves as the major source of one-carbon groups required for the biosynthesis of purines, thymidylate, methionine, and other important biomolecules. Also exhibits THF-independent aldolase activity toward beta-hydroxyamino acids, producing glycine and aldehydes, via a retro-aldol mechanism. In Acinetobacter radioresistens, this protein is Serine hydroxymethyltransferase.